The following is a 1009-amino-acid chain: Adhesion G-protein coupled receptor G2 (1009 aa).

Residues 1-37 (MLFSGGQYSPVGRPEEVLLIYKIFLVIICFHVILVTS) form the signal peptide. Over 38 to 617 (LKENGNSSLL…SRTSLPPSQM (580 aa)) the chain is Extracellular. N-linked (GlcNAc...) asparagine glycosylation is found at asparagine 43, asparagine 77, asparagine 91, asparagine 103, asparagine 109, asparagine 127, asparagine 136, asparagine 154, asparagine 178, and asparagine 186. 2 disordered regions span residues 279-305 (MTPS…ASSP) and 325-346 (SHTL…PSVP). Over residues 280-293 (TPSTPSLTQESNLP) the composition is skewed to polar residues. Residues asparagine 362, asparagine 427, asparagine 448, asparagine 453, asparagine 520, asparagine 534, asparagine 539, asparagine 543, and asparagine 589 are each glycosylated (N-linked (GlcNAc...) asparagine). One can recognise a GAIN-B domain in the interval 453–611 (NTTTFAAQDP…GILLDLSRTS (159 aa)). Cystine bridges form between cysteine 562-cysteine 593 and cysteine 581-cysteine 595. Positions 562 to 611 (CVFWDLGRNGGKGGWSSDGCSVKDKRMNETICTCSHLTSFGILLDLSRTS) are GPS. The segment at 600-611 (SFGILLDLSRTS) is stachel. The helical transmembrane segment at 618–640 (MALTFITYIGCGLSSIFLSVTLV) threads the bilayer. Residues 641-655 (TYIAFEKIRRDYPSK) are Cytoplasmic-facing. A helical membrane pass occupies residues 656 to 679 (ILIQLCAALLLLNLIFLLDSWIAL). Over 680-683 (YNTR) the chain is Extracellular. Residues 684 to 709 (GFCIAVAVFLHYFLLVSFTWMGLEAF) traverse the membrane as a helical segment. The cysteines at positions 686 and 770 are disulfide-linked. Residues 710-728 (HMYLALVKVFNTYIRKYIL) lie on the Cytoplasmic side of the membrane. Residues 729-751 (KFCIVGWGIPAVVVSIVLTISPD) traverse the membrane as a helical segment. At 752 to 776 (NYGIGSYGKFPNGTPDDFCWINSNV) the chain is on the extracellular side. A helical transmembrane segment spans residues 777-802 (VFYITVVGYFCVIFLLNVSMFIVVLV). Topologically, residues 803–823 (QLCRIKKKKQLGAQRKTSIQD) are cytoplasmic. Residues 824 to 845 (LRSIAGLTFLLGITWGFAFFAW) form a helical membrane-spanning segment. The Extracellular portion of the chain corresponds to 846–850 (GPVNV). N-linked (GlcNAc...) asparagine glycosylation occurs at asparagine 849. The helical transmembrane segment at 851 to 872 (TFMYLFAIFNTLQGFFIFIFYC) threads the bilayer. Asparagine 860 is a binding site for 3beta-hydroxyandrost-5-en-17-one. At 873 to 1009 (AAKENVRKQW…RGSLHFIEQM (137 aa)) the chain is on the cytoplasmic side. At serine 1002 the chain carries Phosphoserine.

Belongs to the G-protein coupled receptor 2 family. Adhesion G-protein coupled receptor (ADGR) subfamily. As to quaternary structure, heterodimer of 2 chains generated by proteolytic processing; the large extracellular N-terminal fragment and the membrane-bound C-terminal fragment predominantly remain associated and non-covalently linked. Interacts with CFTR. Proteolytically cleaved into 2 subunits, an extracellular subunit and a seven-transmembrane subunit. Post-translationally, highly glycosylated. As to expression, epididymis-specific expression (at protein level). Associated with apical membranes of efferent ductule and proximal epididymal duct epithelia. Mainly expressed in the nonciliated principal cells of the proximal excurrent ducts.

It localises to the apical cell membrane. Forms a heterodimer of 2 chains generated by proteolytic processing that remain associated through non-covalent interactions mediated by the GAIN-B domain. In the inactivated receptor, the Stachel sequence (also named stalk) is embedded in the GAIN-B domain, where it adopts a beta-strand conformation. On activation, the Stachel moves into the 7 transmembrane region and adopts a twisted hook-shaped configuration that forms contacts within the receptor, leading to coupling of a G-alpha protein, which activates signaling. The cleaved GAIN-B and N-terminal domains can then dissociate from the rest of the receptor. Deoxycorticosterone (DOC) acts as an antagonist of ADGRG2. Functionally, adhesion G-protein coupled receptor (aGPCR) for steroid hormones, such as dehydroepiandrosterone (DHEA; also named 3beta-hydroxyandrost-5-en-17-one) and androstenedione. Involved in a signal transduction pathway controlling epididymal function and male fertility. Ligand binding causes a conformation change that triggers signaling via guanine nucleotide-binding proteins (G proteins) and modulates the activity of downstream effectors, such as adenylate cyclase. ADGRG2 is coupled to G(s) G proteins and mediates activation of adenylate cyclase activity. Also able to couple with G(q) G proteins in vitro. May regulate fluid exchange within epididymis. This chain is Adhesion G-protein coupled receptor G2, found in Mus musculus (Mouse).